Consider the following 277-residue polypeptide: Probable septum site-determining protein MinC (277 aa).

The tract at residues 137–164 is disordered; the sequence is ATTGNAPAEPAPAEPAAPAAAPQPPAVP. Positions 145–164 are enriched in pro residues; it reads EPAPAEPAAPAAAPQPPAVP.

The protein belongs to the MinC family. Interacts with MinD and FtsZ.

Functionally, cell division inhibitor that blocks the formation of polar Z ring septums. Rapidly oscillates between the poles of the cell to destabilize FtsZ filaments that have formed before they mature into polar Z rings. Prevents FtsZ polymerization. The protein is Probable septum site-determining protein MinC of Bordetella petrii (strain ATCC BAA-461 / DSM 12804 / CCUG 43448).